A 367-amino-acid chain; its full sequence is Zorya protein ZorE (367 aa).

In terms of biological role, component of antiviral defense system Zorya type II, composed of ZorA, ZorB and ZorE. Expression of Zorya type II in E.coli (strain MG1655) confers resistance to phages SECphi7 and T7. While most T7 infected Zorya-containing cells undergo abortive infection, a minority produce viable phage progeny. These eventually accumulate to a high multiplicity of infection, leading to culture collapse by 170 minutes after initial infection. ZorA and ZorB probably assemble in the cell inner membrane and exert their effect there. This may be a nuclease. The polypeptide is Zorya protein ZorE (Escherichia coli (strain ATCC 8739 / DSM 1576 / NBRC 3972 / NCIMB 8545 / WDCM 00012 / Crooks)).